We begin with the raw amino-acid sequence, 305 residues long: MVTEFIFLGLSDSQELQTFLFMLFFVFYGGIVFGNLLIVITVVSDSHLHSPMYFLLANLSLIDLSLSSVTAPKMITDFFSQRKVISFKGCLVQIFLLHFFGGSEMVILIAMGFDRYIAICKPLHYTTIMCGNACVGIMAVTWGIGFLHSVSQLAFAVHLLFCGPNEVDSFYCDLPRVIKLACTDTYRLDIMVIANSGVLTVCSFVLLIISYTIILMTIQHRPLDKSSKALSTLTAHITVVLLFFGPCVFIYAWPFPIKSLDKFLAVFYSVITPLLNPIIYTLRNKDMKTAIRQLRKWDAHSSVKF.

Residues 1 to 18 lie on the Extracellular side of the membrane; sequence MVTEFIFLGLSDSQELQT. Residues 19–42 form a helical membrane-spanning segment; it reads FLFMLFFVFYGGIVFGNLLIVITV. The Cytoplasmic segment spans residues 43–50; that stretch reads VSDSHLHS. A helical membrane pass occupies residues 51–72; the sequence is PMYFLLANLSLIDLSLSSVTAP. Topologically, residues 73-93 are extracellular; it reads KMITDFFSQRKVISFKGCLVQ. A disulfide bridge links Cys90 with Cys182. A helical transmembrane segment spans residues 94-113; it reads IFLLHFFGGSEMVILIAMGF. Residues 114-132 are Cytoplasmic-facing; it reads DRYIAICKPLHYTTIMCGN. The helical transmembrane segment at 133–151 threads the bilayer; that stretch reads ACVGIMAVTWGIGFLHSVS. Over 152 to 188 the chain is Extracellular; it reads QLAFAVHLLFCGPNEVDSFYCDLPRVIKLACTDTYRL. The helical transmembrane segment at 189 to 212 threads the bilayer; sequence DIMVIANSGVLTVCSFVLLIISYT. Topologically, residues 213–228 are cytoplasmic; sequence IILMTIQHRPLDKSSK. Residues 229–251 form a helical membrane-spanning segment; sequence ALSTLTAHITVVLLFFGPCVFIY. Residues 252–262 are Extracellular-facing; that stretch reads AWPFPIKSLDK. Residues 263-282 traverse the membrane as a helical segment; sequence FLAVFYSVITPLLNPIIYTL. Residues 283-305 lie on the Cytoplasmic side of the membrane; the sequence is RNKDMKTAIRQLRKWDAHSSVKF.

The protein belongs to the G-protein coupled receptor 1 family.

The protein localises to the cell membrane. Functionally, odorant receptor. This is Olfactory receptor 4F5 (OR4F5) from Homo sapiens (Human).